A 362-amino-acid chain; its full sequence is S-adenosylmethionine-dependent nucleotide dehydratase RSAD2 (362 aa).

Residues 47 to 73 (EQPQVRGEPEDTQETQEDGNSTQPTTP) are disordered. Residues 64–73 (DGNSTQPTTP) are compositionally biased toward polar residues. The 221-residue stretch at 70–290 (PTTPVSVNYH…LERHKEVSCL (221 aa)) folds into the Radical SAM core domain. 3 residues coordinate [4Fe-4S] cluster: Cys-84, Cys-88, and Cys-91. The residue at position 198 (Lys-198) is an N6-acetyllysine. A Glycyl lysine isopeptide (Lys-Gly) (interchain with G-Cter in ubiquitin) cross-link involves residue Lys-207.

The protein belongs to the radical SAM superfamily. RSAD2 family. As to quaternary structure, homodimer. Interacts with IRAK1 and TRAF6. Interacts with FPPS. Interacts with HADHB. Interacts (via C-terminus) with VAPA/VAP33 (via C-terminus). [4Fe-4S] cluster is required as a cofactor. Acetylated by HAT1. HAT1-mediated acetylation of Lys-198 in turn recruits UBE4A that stimulates RSAD2 polyubiquitination leading to proteasomal degradation. In terms of processing, 'Lys-6'-linked polyubiquitination at Lys-207 leads to RSAD2 protein degradation. In terms of tissue distribution, expressed at higher levels in atherosclerotic arteries than in normal arteries.

The protein resides in the endoplasmic reticulum membrane. Its subcellular location is the golgi apparatus. The protein localises to the endoplasmic reticulum. It localises to the lipid droplet. It is found in the mitochondrion. The protein resides in the mitochondrion inner membrane. Its subcellular location is the mitochondrion outer membrane. It carries out the reaction CTP + AH2 + S-adenosyl-L-methionine = 3'-deoxy-3',4'-didehydro-CTP + 5'-deoxyadenosine + L-methionine + A + H2O + H(+). IRAK1 and TRAF6 synergistically activate RSAD2 increasing its activity with CTP as substrate about 10-fold. In terms of biological role, interferon-inducible antiviral protein which plays a major role in the cell antiviral state induced by type I and type II interferon. Catalyzes the conversion of cytidine triphosphate (CTP) to 3'-deoxy-3',4'-didehydro-CTP (ddhCTP) via a SAM-dependent radical mechanism. In turn, ddhCTP acts as a chain terminator for the RNA-dependent RNA polymerases from multiple viruses and directly inhibits viral replication. Therefore, inhibits a wide range of DNA and RNA viruses. Also promotes TLR7 and TLR9-dependent production of IFN-beta production in plasmacytoid dendritic cells (pDCs) by facilitating 'Lys-63'-linked ubiquitination of IRAK1 by TRAF6. Plays a role in CD4+ T-cells activation and differentiation. Facilitates T-cell receptor (TCR)-mediated GATA3 activation and optimal T-helper 2 (Th2) cytokine production by modulating NFKB1 and JUNB activities. Can inhibit secretion of soluble proteins. This is S-adenosylmethionine-dependent nucleotide dehydratase RSAD2 from Mus musculus (Mouse).